The following is a 456-amino-acid chain: UDP-N-acetylmuramoylalanine--D-glutamate ligase (456 aa).

Residue 121–127 participates in ATP binding; that stretch reads GTNGKTT.

Belongs to the MurCDEF family.

The protein resides in the cytoplasm. It carries out the reaction UDP-N-acetyl-alpha-D-muramoyl-L-alanine + D-glutamate + ATP = UDP-N-acetyl-alpha-D-muramoyl-L-alanyl-D-glutamate + ADP + phosphate + H(+). It participates in cell wall biogenesis; peptidoglycan biosynthesis. Its function is as follows. Cell wall formation. Catalyzes the addition of glutamate to the nucleotide precursor UDP-N-acetylmuramoyl-L-alanine (UMA). The protein is UDP-N-acetylmuramoylalanine--D-glutamate ligase of Desulfotalea psychrophila (strain LSv54 / DSM 12343).